The sequence spans 193 residues: Sarcoplasmic calcium-binding protein, alpha chain (193 aa).

IgE-binding epitope stretches follow at residues 10–36 (KYVV…LAVR) and 49–72 (DAYA…ADFN). EF-hand domains lie at 16–40 (MYDI…NTLI), 57–92 (IMRN…HCQG), and 101–136 (AFKV…RSAF). Residues D18, D20, N22, D29, D70, N72, D74, E76, E81, D114, N116, D118, K120, and E125 each contribute to the Ca(2+) site. Positions 130 to 147 (CITRSAFAEVKEIDDAYN) are igE-binding epitope.

SCPs from crayfish, lobster, and shrimp are polymorphic dimers; three isotypes (alpha-alpha, alpha-beta, and beta-beta) have been identified. In terms of tissue distribution, expressed in tail muscle (at protein level).

Its function is as follows. Like parvalbumins, SCPs seem to be more abundant in fast contracting muscles, but no functional relationship can be established from this distribution. The polypeptide is Sarcoplasmic calcium-binding protein, alpha chain (Penaeus vannamei (Whiteleg shrimp)).